Reading from the N-terminus, the 198-residue chain is Recombination protein RecR (198 aa).

The C4-type zinc-finger motif lies at 57–72 (CEKCNTFTEAQICEVC). The Toprim domain maps to 80–175 (TLLCVVETPA…SVTRLARGVP (96 aa)).

The protein belongs to the RecR family.

May play a role in DNA repair. It seems to be involved in an RecBC-independent recombinational process of DNA repair. It may act with RecF and RecO. The protein is Recombination protein RecR of Paraburkholderia phymatum (strain DSM 17167 / CIP 108236 / LMG 21445 / STM815) (Burkholderia phymatum).